Reading from the N-terminus, the 89-residue chain is Small ribosomal subunit protein uS15 (89 aa).

It belongs to the universal ribosomal protein uS15 family. In terms of assembly, part of the 30S ribosomal subunit. Forms a bridge to the 50S subunit in the 70S ribosome, contacting the 23S rRNA.

One of the primary rRNA binding proteins, it binds directly to 16S rRNA where it helps nucleate assembly of the platform of the 30S subunit by binding and bridging several RNA helices of the 16S rRNA. In terms of biological role, forms an intersubunit bridge (bridge B4) with the 23S rRNA of the 50S subunit in the ribosome. This Shewanella sediminis (strain HAW-EB3) protein is Small ribosomal subunit protein uS15.